Consider the following 343-residue polypeptide: N-acetyl-gamma-glutamyl-phosphate reductase (343 aa).

C146 is a catalytic residue.

The protein belongs to the NAGSA dehydrogenase family. Type 1 subfamily.

The protein resides in the cytoplasm. The enzyme catalyses N-acetyl-L-glutamate 5-semialdehyde + phosphate + NADP(+) = N-acetyl-L-glutamyl 5-phosphate + NADPH + H(+). The protein operates within amino-acid biosynthesis; L-arginine biosynthesis; N(2)-acetyl-L-ornithine from L-glutamate: step 3/4. Catalyzes the NADPH-dependent reduction of N-acetyl-5-glutamyl phosphate to yield N-acetyl-L-glutamate 5-semialdehyde. The chain is N-acetyl-gamma-glutamyl-phosphate reductase from Arthrobacter sp. (strain FB24).